The sequence spans 138 residues: Large ribosomal subunit protein uL16c (138 aa).

This sequence belongs to the universal ribosomal protein uL16 family. In terms of assembly, part of the 50S ribosomal subunit.

It localises to the plastid. It is found in the chloroplast. The polypeptide is Large ribosomal subunit protein uL16c (Chaetosphaeridium globosum (Charophycean green alga)).